The sequence spans 112 residues: Cryptic phage CTXphi transcriptional repressor RstR (112 aa).

One can recognise an HTH cro/C1-type domain in the interval 7–61 (LANQRKAINKTQAQMADEIGISLTSYKKYESGEGLPTMENLVKIADALEISIDEL). Residues 18–37 (QAQMADEIGISLTSYKKYES) constitute a DNA-binding region (H-T-H motif).

Functionally, transcriptional repressor of the integrated CTXPhi phage gene rstA2. In Vibrio cholerae serotype O1 (strain ATCC 39315 / El Tor Inaba N16961), this protein is Cryptic phage CTXphi transcriptional repressor RstR (rstR1).